Reading from the N-terminus, the 72-residue chain is MAKEDCIEMEGVVLEVLPNTMFRVELENGRIVTAHISGKMRKNYIRILTGDKVVVEITPYDLTKGRIKFRSK.

The S1-like domain maps to 1-72; sequence MAKEDCIEME…TKGRIKFRSK (72 aa).

It belongs to the IF-1 family. In terms of assembly, component of the 30S ribosomal translation pre-initiation complex which assembles on the 30S ribosome in the order IF-2 and IF-3, IF-1 and N-formylmethionyl-tRNA(fMet); mRNA recruitment can occur at any time during PIC assembly.

It localises to the cytoplasm. One of the essential components for the initiation of protein synthesis. Stabilizes the binding of IF-2 and IF-3 on the 30S subunit to which N-formylmethionyl-tRNA(fMet) subsequently binds. Helps modulate mRNA selection, yielding the 30S pre-initiation complex (PIC). Upon addition of the 50S ribosomal subunit IF-1, IF-2 and IF-3 are released leaving the mature 70S translation initiation complex. The sequence is that of Translation initiation factor IF-1 from Francisella tularensis subsp. tularensis (strain WY96-3418).